The sequence spans 311 residues: Homeobox protein CDX-2 (311 aa).

A Phosphoserine modification is found at S60. A disordered region spans residues 111 to 151 (EYHAHHHPHHHPHHPAASPSCASGLLQTLNLGPPGPAATAA). Basic residues predominate over residues 114-124 (AHHHPHHHPHH). The interaction with DNA stretch occupies residues 185-215 (KDKYRVVYTDHQRLELEKEFHFSRYITIRRK). The segment at residues 185-244 (KDKYRVVYTDHQRLELEKEFHFSRYITIRRKSELAATLGLSERQVKIWFQNRRAKERKIK) is a DNA-binding region (homeobox). Positions 227 to 241 (RQVKIWFQNRRAKER) are interaction with 5-mCpG DNA. The tract at residues 239 to 311 (KERKIKKKQQ…GGVLNSTVTQ (73 aa)) is disordered. Positions 248-257 (QQQQQQQQQQ) are enriched in low complexity. Over residues 258 to 268 (PPQPPPQPSQP) the composition is skewed to pro residues. A Phosphoserine; by CDK2 modification is found at S281. Positions 281-293 (SPVTSLQGSVPGS) match the 4S motif; modulates transactivation activity and protein stability motif. Residues 285-298 (SLQGSVPGSVPGVL) show a composition bias toward low complexity.

This sequence belongs to the Caudal homeobox family. Can bind DNA as a monomer or homodimer. Post-translationally, ubiquitinated, leading to its degradation by the proteasome. Phosphorylation at Ser-60 reduces transactivation capacity. Phosphorylation at Ser-281 reduces transactivation capacity and increases ubiquitin-dependent proteasome degradation. In the intestine, detected in ileum and proximal and distal colon (at protein level). In adult small intestine, predominantly localized in crypt and lower villus cells of the epithelium (at protein level). Expressed in the intestine but not detected in other tissues including stomach, liver, kidney, spleen, brain, heart, lung, pancreas, skeletal muscle and testis. Expressed specifically in gut epithelium where it is not restricted to a particular cell lineage. Abundant expression is seen in the proximal colon with slightly lower levels in distal colon. Expression in the proximal colon is not restricted either to a particular cell lineage or stage of differentiation while in the distal colon it is more abundant in the differentiated cells towards the top of the crypt.

The protein resides in the nucleus. Functionally, transcription factor which regulates the transcription of multiple genes expressed in the intestinal epithelium. Binds to the promoter of the intestinal sucrase-isomaltase SI and activates SI transcription. Binds to the DNA sequence 5'-ATAAAAACTTAT-3' in the promoter region of VDR and activates VDR transcription. Binds to and activates transcription of LPH. Activates transcription of CLDN2 and intestinal mucin MUC2. Binds to the 5'-AATTTTTTACAACACCT-3' DNA sequence in the promoter region of CA1 and activates CA1 transcription. Important in broad range of functions from early differentiation to maintenance of the intestinal epithelial lining of both the small and large intestine. Binds preferentially to methylated DNA. The chain is Homeobox protein CDX-2 (Cdx2) from Mus musculus (Mouse).